Reading from the N-terminus, the 156-residue chain is Aspercryptin biosynthesis cluster protein B (156 aa).

The N-terminal stretch at 1–39 is a signal peptide; the sequence is MRMANRIGAGRKSALQLSHLRTRLTSSAAAVATAPTLDP.

The protein belongs to the YciI family.

It participates in secondary metabolite biosynthesis. In terms of biological role, part of the gene cluster that mediates the biosynthesis of aspercryptins, linear lipopeptides built from six amino acids including 2 highly unusual and nonproteogenic amino acids, 2-amino-octanoic acid (2aoa) and 2-amino-dodecanol (2adol). The core structure of aspercryptins is as follows: Ser/Ala-Thr-Ile/Val-2aoa-Aasn-2adol. The first step of aspercryptin biosynthesis is the generation of the fatty acid precursors, octanoic and dodecanoic acids, by the FAS subunits atnF and atnM. The fatty acid precursors are likely transformed into the corresponding alpha-amino fatty acids in three steps. First, they are hydroxylated by the cytochrome P450 monooxygenase atnE, then oxidized to the corresponding alpha-keto acids by the NAD(P)-dependent oxidoreductase atnD, and finally converted to the alpha-amino fatty acids by the PLP-dependent aminotransferases atnH or atnJ. the alpha-amino fatty acids, 2-amino-octanoic and 2-amino-dodecanoic acids, are recognized, activated, and covalently tethered to the NRPS atnA by its fourth and sixth adenylation domains. The second module of atnA is the Thr module and contains an epimerase (E) domain responsible for the epimerization of Thr to D-allo-Thr. Additionally, despite atnA having only one epimerase domain, the first amino acid of aspercryptin A1 is D-Ser, suggesting that serine is either loaded directly as D-Ser on the first module or that the epimerase domain in the threonine module epimerizes both L-Ser and L-Thr. After condensation of the hexapeptide of aspercryptin, the C-terminal reductase (TE) domain might be involved in the reductive release and production of the aldehyde hexapeptide. Further reduction would generate aspercryptins. The variety of aspercryptins produced reflects the flexibility of the atnA NRPS, allowing incorporation of alanine instead of serine, valine for isoleucine, and a C10 fatty amino alcohol instead of the C12 version. AtnB seems to be involved in the selectivity for Ile versus Val by the third module. Moreover, type B, C and D aspercryptins have an additional N-terminal cichorine, acetyl and propionyl group respectively. This chain is Aspercryptin biosynthesis cluster protein B, found in Emericella nidulans (strain FGSC A4 / ATCC 38163 / CBS 112.46 / NRRL 194 / M139) (Aspergillus nidulans).